A 133-amino-acid polypeptide reads, in one-letter code: Probable non-specific lipid-transfer protein 2 (133 aa).

The signal sequence occupies residues 1–31 (MRTVSMAALVVIAAALAWTSSAELASAPAPG). 4 disulfide bridges follow: cysteine 35–cysteine 83, cysteine 45–cysteine 60, cysteine 61–cysteine 106, and cysteine 81–cysteine 121.

Belongs to the plant LTP family.

Its function is as follows. Plant non-specific lipid-transfer proteins transfer phospholipids as well as galactolipids across membranes. May play a role in wax or cutin deposition in the cell walls of expanding epidermal cells and certain secretory tissues. This Parietaria judaica (Pellitory-of-the-wall) protein is Probable non-specific lipid-transfer protein 2.